We begin with the raw amino-acid sequence, 286 residues long: 4-hydroxybenzoate octaprenyltransferase (286 aa).

7 helical membrane-spanning segments follow: residues glycine 21–methionine 40, isoleucine 95–valine 115, phenylalanine 142–valine 162, tryptophan 167–valine 187, isoleucine 211–glutamate 231, leucine 235–phenylalanine 255, and phenylalanine 266–isoleucine 286.

Belongs to the UbiA prenyltransferase family. The cofactor is Mg(2+).

The protein localises to the cell inner membrane. The catalysed reaction is all-trans-octaprenyl diphosphate + 4-hydroxybenzoate = 4-hydroxy-3-(all-trans-octaprenyl)benzoate + diphosphate. It functions in the pathway cofactor biosynthesis; ubiquinone biosynthesis. In terms of biological role, catalyzes the prenylation of para-hydroxybenzoate (PHB) with an all-trans polyprenyl group. Mediates the second step in the final reaction sequence of ubiquinone-8 (UQ-8) biosynthesis, which is the condensation of the polyisoprenoid side chain with PHB, generating the first membrane-bound Q intermediate 3-octaprenyl-4-hydroxybenzoate. The protein is 4-hydroxybenzoate octaprenyltransferase of Shewanella putrefaciens (strain CN-32 / ATCC BAA-453).